Reading from the N-terminus, the 588-residue chain is Adenine deaminase (588 aa).

Belongs to the metallo-dependent hydrolases superfamily. Adenine deaminase family. Homodimer. Mn(2+) is required as a cofactor.

It carries out the reaction adenine + H2O + H(+) = hypoxanthine + NH4(+). This Escherichia coli (strain 55989 / EAEC) protein is Adenine deaminase.